Consider the following 315-residue polypeptide: Malate dehydrogenase (315 aa).

9–15 (GGSGNVG) serves as a coordination point for NAD(+). Substrate is bound by residues R84 and R90. Residues N97 and 120–122 (VSN) each bind NAD(+). Substrate-binding residues include N122 and R153. The active-site Proton acceptor is H177.

It belongs to the LDH/MDH superfamily.

It carries out the reaction (S)-malate + NAD(+) = oxaloacetate + NADH + H(+). Catalyzes the reversible oxidation of malate to oxaloacetate. This Helicobacter hepaticus (strain ATCC 51449 / 3B1) protein is Malate dehydrogenase.